A 279-amino-acid polypeptide reads, in one-letter code: Large ribosomal subunit protein uL2 (279 aa).

Residues 222–279 form a disordered region; the sequence is GVAMNPVDHPHGGGEGRTSGGRHPVTPAGKPTKGAKTRVNKATDKFIIRSRHKAKKGR. Positions 269 to 279 are enriched in basic residues; the sequence is IRSRHKAKKGR.

It belongs to the universal ribosomal protein uL2 family. Part of the 50S ribosomal subunit. Forms a bridge to the 30S subunit in the 70S ribosome.

Its function is as follows. One of the primary rRNA binding proteins. Required for association of the 30S and 50S subunits to form the 70S ribosome, for tRNA binding and peptide bond formation. It has been suggested to have peptidyltransferase activity; this is somewhat controversial. Makes several contacts with the 16S rRNA in the 70S ribosome. This is Large ribosomal subunit protein uL2 from Caulobacter vibrioides (strain ATCC 19089 / CIP 103742 / CB 15) (Caulobacter crescentus).